A 78-amino-acid polypeptide reads, in one-letter code: LYR motif-containing protein 9 (78 aa).

Belongs to the complex I LYR family. LYRM9 subfamily.

This is LYR motif-containing protein 9 (lyrm9) from Xenopus tropicalis (Western clawed frog).